A 492-amino-acid polypeptide reads, in one-letter code: Steroid 21-hydroxylase (492 aa).

2 residues coordinate heme b: arginine 91 and lysine 120. Arginine 231 contacts 17alpha-hydroxyprogesterone. Position 231 (arginine 231) interacts with progesterone. Heme b contacts are provided by histidine 363, arginine 424, and cysteine 426.

The protein belongs to the cytochrome P450 family. It depends on heme b as a cofactor.

The protein resides in the endoplasmic reticulum membrane. Its subcellular location is the microsome membrane. The catalysed reaction is 17alpha-hydroxyprogesterone + reduced [NADPH--hemoprotein reductase] + O2 = 11-deoxycortisol + oxidized [NADPH--hemoprotein reductase] + H2O + H(+). It catalyses the reaction progesterone + reduced [NADPH--hemoprotein reductase] + O2 = 21-hydroxyprogesterone + oxidized [NADPH--hemoprotein reductase] + H2O + H(+). In terms of biological role, specifically catalyzes the 21-hydroxylation of steroids. Required for the adrenal synthesis of mineralocorticoids and glucocorticoids. The chain is Steroid 21-hydroxylase (CYP21) from Canis lupus familiaris (Dog).